A 1549-amino-acid chain; its full sequence is VPS10 homolog 1 (1549 aa).

A signal peptide spans 1–21 (MALFRALYIIWVFLLIPLSNA). The Lumenal segment spans residues 22–1369 (EEFTPKVTRT…AFREKYSINT (1348 aa)). BNR repeat units follow at residues 57 to 68 (EISFDAGENWKT), 101 to 112 (YVTDDQGKSWRP), 159 to 170 (IYTTNDGVSFSQ), 228 to 239 (ILSADGGETFKE), 393 to 404 (KVSVDNGLTWTN), and 465 to 476 (FISRDSGLTWRL). The N-linked (GlcNAc...) asparagine glycan is linked to Asn479. 2 BNR repeats span residues 511–522 (YYSLDQGKTWGE) and 740–751 (YISHDGGQTIKR). Residue Asn769 is glycosylated (N-linked (GlcNAc...) asparagine). Residues 837–848 (YLTKDGGETFTE) form a BNR 9 repeat. N-linked (GlcNAc...) asparagine glycosylation occurs at Asn986. 3 BNR repeats span residues 1040-1051 (KITFNDGSDWNF), 1119-1130 (FLTTDGGETWTE), and 1160-1171 (SYSTDFGKTWKD). The chain crosses the membrane as a helical span at residues 1370–1390 (GAYALVFVTILLVIFFVAWFV). The Cytoplasmic segment spans residues 1391 to 1549 (YDRGIRRNGG…DLAAARSEDK (159 aa)). The segment at 1479–1549 (EPDGFHEDSN…DLAAARSEDK (71 aa)) is disordered. Over residues 1489–1501 (DLSSFRGQGSNSE) the composition is skewed to polar residues. The span at 1535–1549 (ASHESDLAAARSEDK) shows a compositional bias: basic and acidic residues.

It belongs to the VPS10-related sortilin family.

The protein localises to the golgi apparatus. The protein resides in the trans-Golgi network membrane. It is found in the endosome membrane. Functionally, functions as a sorting receptor in the Golgi compartment required for the intracellular sorting and delivery of soluble vacuolar proteins, like carboxypeptidase Y (CPY) and proteinase A. This is VPS10 homolog 1 (VTH1) from Saccharomyces cerevisiae (strain ATCC 204508 / S288c) (Baker's yeast).